A 306-amino-acid polypeptide reads, in one-letter code: Ribonuclease Z (306 aa).

Positions 63, 65, 67, 68, 142, 213, and 271 each coordinate Zn(2+). D67 serves as the catalytic Proton acceptor.

Belongs to the RNase Z family. As to quaternary structure, homodimer. The cofactor is Zn(2+).

The catalysed reaction is Endonucleolytic cleavage of RNA, removing extra 3' nucleotides from tRNA precursor, generating 3' termini of tRNAs. A 3'-hydroxy group is left at the tRNA terminus and a 5'-phosphoryl group is left at the trailer molecule.. Functionally, zinc phosphodiesterase, which displays some tRNA 3'-processing endonuclease activity. Probably involved in tRNA maturation, by removing a 3'-trailer from precursor tRNA. This is Ribonuclease Z from Oceanobacillus iheyensis (strain DSM 14371 / CIP 107618 / JCM 11309 / KCTC 3954 / HTE831).